A 133-amino-acid chain; its full sequence is L-cystatin (133 aa).

The first 19 residues, 1-19 (MEGYNILAVLIILVGVSMG), serve as a signal peptide directing secretion. Glutamine 20 carries the pyrrolidone carboxylic acid modification. Residues 67 to 71 (QVVSG) carry the Secondary area of contact motif. Cystine bridges form between cysteine 85/cysteine 98 and cysteine 109/cysteine 129.

Belongs to the cystatin family. Expressed in hemocytes and slightly in heart.

The protein resides in the cytoplasmic granule. In terms of biological role, tight-binding inhibitor for papain. It has an important role in the protection of cells, antimicrobial activity against Gram-negative bacteria, defense against invading microbes, and response to external stimuli. This chain is L-cystatin, found in Tachypleus tridentatus (Japanese horseshoe crab).